A 257-amino-acid chain; its full sequence is Acetylglutamate kinase (257 aa).

Substrate is bound by residues 43–44, arginine 65, and asparagine 157; that span reads GG. Residues 180-185 and 208-210 contribute to the ATP site; these read DVSGIL and IIT.

The protein belongs to the acetylglutamate kinase family. ArgB subfamily. As to quaternary structure, homodimer.

The protein resides in the cytoplasm. The catalysed reaction is N-acetyl-L-glutamate + ATP = N-acetyl-L-glutamyl 5-phosphate + ADP. It participates in amino-acid biosynthesis; L-arginine biosynthesis; N(2)-acetyl-L-ornithine from L-glutamate: step 2/4. Its function is as follows. Catalyzes the ATP-dependent phosphorylation of N-acetyl-L-glutamate. The sequence is that of Acetylglutamate kinase from Proteus mirabilis (strain HI4320).